Here is a 429-residue protein sequence, read N- to C-terminus: Argininosuccinate lyase (429 aa).

Belongs to the lyase 1 family. Argininosuccinate lyase subfamily.

The protein localises to the cytoplasm. The catalysed reaction is 2-(N(omega)-L-arginino)succinate = fumarate + L-arginine. Its pathway is amino-acid biosynthesis; L-arginine biosynthesis; L-arginine from L-ornithine and carbamoyl phosphate: step 3/3. This Pyrobaculum calidifontis (strain DSM 21063 / JCM 11548 / VA1) protein is Argininosuccinate lyase.